Reading from the N-terminus, the 475-residue chain is Cytosolic non-specific dipeptidase (475 aa).

An N6-acetyllysine modification is found at Lys-9. Ser-58 carries the phosphoserine modification. His-99 lines the Mn(2+) pocket. Asp-101 is an active-site residue. Asp-132 lines the Mn(2+) pocket. The Proton acceptor role is filled by Glu-166. Residues 166–167 (EE), Asp-195, His-228, Thr-330, Arg-343, Ser-417, and His-445 each bind substrate. Glu-167 and Asp-195 together coordinate Mn(2+). His-445 is a Mn(2+) binding site.

The protein belongs to the peptidase M20A family. Homodimer. The cofactor is Mn(2+).

It is found in the cytoplasm. It catalyses the reaction Hydrolysis of dipeptides, preferentially hydrophobic dipeptides including prolyl amino acids.. The catalysed reaction is L-threonyl-L-threonine + H2O = 2 L-threonine. The enzyme catalyses L-threonyl-L-serine + H2O = L-threonine + L-serine. It carries out the reaction L-seryl-L-threonine + H2O = L-threonine + L-serine. It catalyses the reaction L-cysteinylglycine + H2O = L-cysteine + glycine. The catalysed reaction is L-alanyl-L-cysteine + H2O = L-cysteine + L-alanine. The enzyme catalyses (S)-lactate + L-phenylalanine = N-[(S)-lactoyl]-L-phenylalanine + H2O. In terms of biological role, catalyzes the peptide bond hydrolysis in dipeptides, displaying a non-redundant activity toward threonyl dipeptides. Mediates threonyl dipeptide catabolism in a tissue-specific way. Has high dipeptidase activity toward cysteinylglycine, an intermediate metabolite in glutathione metabolism. Metabolizes N-lactoyl-amino acids, both through hydrolysis to form lactic acid and amino acids, as well as through their formation by reverse proteolysis. Plays a role in the regulation of cell cycle arrest and apoptosis. In Bos taurus (Bovine), this protein is Cytosolic non-specific dipeptidase (CNDP2).